A 211-amino-acid chain; its full sequence is Large ribosomal subunit protein uL3 (211 aa).

Residues 130 to 139 (QDATHGNSLS) are compositionally biased toward polar residues. Residues 130 to 151 (QDATHGNSLSHRAPGSIGQNQT) form a disordered region. Gln-150 carries the N5-methylglutamine modification.

This sequence belongs to the universal ribosomal protein uL3 family. Part of the 50S ribosomal subunit. Forms a cluster with proteins L14 and L19. In terms of processing, methylated by PrmB.

Its function is as follows. One of the primary rRNA binding proteins, it binds directly near the 3'-end of the 23S rRNA, where it nucleates assembly of the 50S subunit. The polypeptide is Large ribosomal subunit protein uL3 (Alcanivorax borkumensis (strain ATCC 700651 / DSM 11573 / NCIMB 13689 / SK2)).